The primary structure comprises 367 residues: Histidinol-phosphate aminotransferase (367 aa).

An N6-(pyridoxal phosphate)lysine modification is found at K226.

Belongs to the class-II pyridoxal-phosphate-dependent aminotransferase family. Histidinol-phosphate aminotransferase subfamily. As to quaternary structure, homodimer. It depends on pyridoxal 5'-phosphate as a cofactor.

The catalysed reaction is L-histidinol phosphate + 2-oxoglutarate = 3-(imidazol-4-yl)-2-oxopropyl phosphate + L-glutamate. Its pathway is amino-acid biosynthesis; L-histidine biosynthesis; L-histidine from 5-phospho-alpha-D-ribose 1-diphosphate: step 7/9. This Aliarcobacter butzleri (strain RM4018) (Arcobacter butzleri) protein is Histidinol-phosphate aminotransferase.